The following is an 89-amino-acid chain: Small ribosomal subunit protein uS15 (89 aa).

This sequence belongs to the universal ribosomal protein uS15 family. In terms of assembly, part of the 30S ribosomal subunit. Forms a bridge to the 50S subunit in the 70S ribosome, contacting the 23S rRNA.

Functionally, one of the primary rRNA binding proteins, it binds directly to 16S rRNA where it helps nucleate assembly of the platform of the 30S subunit by binding and bridging several RNA helices of the 16S rRNA. In terms of biological role, forms an intersubunit bridge (bridge B4) with the 23S rRNA of the 50S subunit in the ribosome. The chain is Small ribosomal subunit protein uS15 from Allorhizobium ampelinum (strain ATCC BAA-846 / DSM 112012 / S4) (Agrobacterium vitis (strain S4)).